Consider the following 302-residue polypeptide: Urease accessory protein UreG (302 aa).

3 stretches are compositionally biased toward basic and acidic residues: residues 1–32, 40–56, and 64–76; these read MHDPGEHGHGRHDHDHDHDHVHDHDHDHDHVH, HEHEHAHEHAHGHEHGH, and HAHEHAHGHTHEH. The interval 1–76 is disordered; the sequence is MHDPGEHGHG…EHAHGHTHEH (76 aa). GTP is bound at residue 105-112; it reads GPVGSGKT.

This sequence belongs to the SIMIBI class G3E GTPase family. UreG subfamily. As to quaternary structure, homodimer. UreD, UreF and UreG form a complex that acts as a GTP-hydrolysis-dependent molecular chaperone, activating the urease apoprotein by helping to assemble the nickel containing metallocenter of UreC. The UreE protein probably delivers the nickel.

Its subcellular location is the cytoplasm. Facilitates the functional incorporation of the urease nickel metallocenter. This process requires GTP hydrolysis, probably effectuated by UreG. This is Urease accessory protein UreG from Sorangium cellulosum (strain So ce56) (Polyangium cellulosum (strain So ce56)).